Here is an 828-residue protein sequence, read N- to C-terminus: Kinesin-associated protein 3 (828 aa).

ARM repeat units follow at residues 332–372 (YVEN…NLSF), 373–411 (DTDL…HVSQ), and 577–611 (DDSC…CQIV).

Heterotrimer of a 115 kDa subunit (KAP115) and two kinesin-like subunits of 95 kDa (KRP95) and 85 kDa (KRP85).

Functionally, binds to the tail domain of the KRP85/KRP95 heterodimer to form a heterotrimeric kinesin-II complex and may regulate the spindle vesicle targeting of this complex. This is Kinesin-associated protein 3 (KAP115) from Strongylocentrotus purpuratus (Purple sea urchin).